Reading from the N-terminus, the 730-residue chain is Elongation factor 2 (730 aa).

Residues 19-260 (VMIRNIAIIA…MVIRFLPSPI (242 aa)) form the tr-type G domain. Residues 28–35 (AHIDHGKT), 94–98 (DTPGH), and 148–151 (NKVD) contribute to the GTP site. His-596 is modified (diphthamide).

It belongs to the TRAFAC class translation factor GTPase superfamily. Classic translation factor GTPase family. EF-G/EF-2 subfamily.

The protein localises to the cytoplasm. Functionally, catalyzes the GTP-dependent ribosomal translocation step during translation elongation. During this step, the ribosome changes from the pre-translocational (PRE) to the post-translocational (POST) state as the newly formed A-site-bound peptidyl-tRNA and P-site-bound deacylated tRNA move to the P and E sites, respectively. Catalyzes the coordinated movement of the two tRNA molecules, the mRNA and conformational changes in the ribosome. This chain is Elongation factor 2 (fusA), found in Methanococcoides methylutens.